Consider the following 301-residue polypeptide: Putative S-adenosyl-L-methionine-dependent methyltransferase BCG_0775c (301 aa).

S-adenosyl-L-methionine-binding positions include aspartate 130 and 159–160 (DL).

The protein belongs to the UPF0677 family.

Its function is as follows. Exhibits S-adenosyl-L-methionine-dependent methyltransferase activity. In Mycobacterium bovis (strain BCG / Pasteur 1173P2), this protein is Putative S-adenosyl-L-methionine-dependent methyltransferase BCG_0775c.